The following is a 205-amino-acid chain: Interleukin-6 (205 aa).

The signal sequence occupies residues 1–21 (RFTSAFSLGLLLVTATAFPTP). Residues Cys-64 and Cys-70 are joined by a disulfide bond. Ser-73 carries the phosphoserine modification. A disulfide bridge connects residues Cys-93 and Cys-103. Asn-164 carries an N-linked (GlcNAc...) asparagine glycan.

This sequence belongs to the IL-6 superfamily. Component of a hexamer of two molecules each of IL6, IL6R and IL6ST; first binds to IL6R to associate with the signaling subunit IL6ST. Interacts with IL6R (via the N-terminal ectodomain); this interaction may be affected by IL6R-binding with SORL1, hence decreasing IL6 cis signaling. Interacts with SORL1 (via the N-terminal ectodomain); this interaction leads to IL6 internalization and lysosomal degradation. May form a trimeric complex with the soluble SORL1 ectodomain and soluble IL6R receptor; this interaction might stabilize circulating IL6, hence promoting IL6 trans signaling.

The protein resides in the secreted. Functionally, cytokine with a wide variety of biological functions in immunity, tissue regeneration, and metabolism. Binds to IL6R, then the complex associates to the signaling subunit IL6ST/gp130 to trigger the intracellular IL6-signaling pathway. The interaction with the membrane-bound IL6R and IL6ST stimulates 'classic signaling', whereas the binding of IL6 and soluble IL6R to IL6ST stimulates 'trans-signaling'. Alternatively, 'cluster signaling' occurs when membrane-bound IL6:IL6R complexes on transmitter cells activate IL6ST receptors on neighboring receiver cells. IL6 is a potent inducer of the acute phase response. Rapid production of IL6 contributes to host defense during infection and tissue injury, but excessive IL6 synthesis is involved in disease pathology. In the innate immune response, is synthesized by myeloid cells, such as macrophages and dendritic cells, upon recognition of pathogens through toll-like receptors (TLRs) at the site of infection or tissue injury. In the adaptive immune response, is required for the differentiation of B cells into immunoglobulin-secreting cells. Plays a major role in the differentiation of CD4(+) T cell subsets. Essential factor for the development of T follicular helper (Tfh) cells that are required for the induction of germinal-center formation. Required to drive naive CD4(+) T cells to the Th17 lineage. Also required for proliferation of myeloma cells and the survival of plasmablast cells. In terms of biological role, acts as an essential factor in bone homeostasis and on vessels directly or indirectly by induction of VEGF, resulting in increased angiogenesis activity and vascular permeability. Induces, through 'trans-signaling' and synergistically with IL1B and TNF, the production of VEGF. Involved in metabolic controls, is discharged into the bloodstream after muscle contraction increasing lipolysis and improving insulin resistance. 'Trans-signaling' in central nervous system also regulates energy and glucose homeostasis. Mediates, through GLP-1, crosstalk between insulin-sensitive tissues, intestinal L cells and pancreatic islets to adapt to changes in insulin demand. Also acts as a myokine. Plays a protective role during liver injury, being required for maintenance of tissue regeneration. Also has a pivotal role in iron metabolism by regulating HAMP/hepcidin expression upon inflammation or bacterial infection. Through activation of IL6ST-YAP-NOTCH pathway, induces inflammation-induced epithelial regeneration. In Orcinus orca (Killer whale), this protein is Interleukin-6 (IL6).